The sequence spans 417 residues: Vacuolar cation/proton exchanger 3 (417 aa).

At 1–45 (MENPQIEMGAFKANGPQLQNGGLRSSMVQSWNLQRFVESALRSIR) the chain is on the cytoplasmic side. Residues 46–66 (IVIFTSKLNLLLPFGPASIIL) form a helical membrane-spanning segment. Over 67–73 (HYTTSRH) the chain is Extracellular. The helical transmembrane segment at 74–94 (GLVFLFSMLGITPLAERLGYA) threads the bilayer. Topologically, residues 95 to 105 (TEQLAIYTGPT) are cytoplasmic. A helical membrane pass occupies residues 106–126 (VGGLLNATFGNATEMIIAIYA). Residues 115 to 150 (GNATEMIIAIYALKNGMIRVVQQSLLGSILSNMLLV) form a cation selection region. Residues 127 to 140 (LKNGMIRVVQQSLL) are Extracellular-facing. Residues 141–161 (GSILSNMLLVMGCAFFAGGIV) traverse the membrane as a helical segment. Topologically, residues 162–173 (HRNKDQVFSKAT) are cytoplasmic. A helical transmembrane segment spans residues 174 to 194 (AVVNSGLLLMAVMGLMFPAVL). The Extracellular segment spans residues 195-207 (HFTHSEVRQGASE). A helical transmembrane segment spans residues 208–230 (VSLSRFSSCIMLVAYASYLYFQL). Residues 231-258 (SGRNNAYSPIGSEEMPNEDAAEEDEESE) lie on the Cytoplasmic side of the membrane. The chain crosses the membrane as a helical span at residues 259-279 (IGMWESIAWLAMLTLWVSILS). The Extracellular portion of the chain corresponds to 280–291 (EYLVNAIEGASD). A helical membrane pass occupies residues 292 to 312 (SLNLPVAFISVILLPIVGNAA). The segment at 309–344 (GNAAEHASAIMFAMKDKLDITLGVAIGSSTQISMFV) is cation selection. Topologically, residues 313-330 (EHASAIMFAMKDKLDITL) are cytoplasmic. Residues 331–351 (GVAIGSSTQISMFVIPFCVVI) form a helical membrane-spanning segment. The Extracellular portion of the chain corresponds to 352–360 (GWMMGQKMD). A helical membrane pass occupies residues 361–381 (LNFQLFETATLFITVLVVAFM). Over 382-389 (LQDGVANY) the chain is Cytoplasmic. A helical membrane pass occupies residues 390 to 410 (LKGLMLILCYLIVAASFFVHV). Residues 411–417 (DPQSSDD) are Extracellular-facing.

The protein belongs to the Ca(2+):cation antiporter (CaCA) (TC 2.A.19) family. Cation/proton exchanger (CAX) subfamily. In terms of tissue distribution, ubiquitous.

The protein resides in the vacuole membrane. Its function is as follows. Vacuolar cation/proton exchanger (CAX). Translocates Ca(2+) and other metal ions into vacuoles using the proton gradient formed by H(+)-ATPase and H(+)-pyrophosphatase. This Oryza sativa subsp. japonica (Rice) protein is Vacuolar cation/proton exchanger 3 (CAX3).